The chain runs to 483 residues: E3 ubiquitin-protein ligase TRIM50 (483 aa).

Residues 16 to 57 (CPICLEVFKEPLMLQCGHSYCKDCLDNLSQHLDSELCCPVCR) form an RING-type zinc finger. A B box-type zinc finger spans residues 84 to 125 (IEPTVCVHHRNPLSLFCEKDQEFICGLCGLLGSHQHHRVTPV). Zn(2+) contacts are provided by cysteine 89, histidine 92, cysteine 111, and histidine 117. Coiled coils occupy residues 127-169 (TVYS…NESD) and 203-236 (GLVA…GNES). Residues 275-474 (DIKLTVWKRL…LPMVLPPPSG (200 aa)) enclose the B30.2/SPRY domain. Residue lysine 372 is modified to N6-acetyllysine.

This sequence belongs to the TRIM/RBCC family. In terms of assembly, can form dimers and trimers. Interacts with several E2 ubiquitin-conjugating enzymes, including UBE2L6, UBE2E1, UBE2E3. No interaction with UBE2H. Interacts with BECN1. Interacts with SQSTM1. Interacts with NLRP3. Auto-ubiquitinated. Post-translationally, acetylated by EP300 and KAT2B. HDAC6 drives TRIM50 deacetylation. Acetylation antagonizes with TRIM50 ubiquitination. Expressed in the stomach.

The protein resides in the cytoplasm. The enzyme catalyses S-ubiquitinyl-[E2 ubiquitin-conjugating enzyme]-L-cysteine + [acceptor protein]-L-lysine = [E2 ubiquitin-conjugating enzyme]-L-cysteine + N(6)-ubiquitinyl-[acceptor protein]-L-lysine.. In terms of biological role, E3 ubiquitin-protein ligase that ubiquitinates Beclin-1/BECN1 in a 'Lys-63'-dependent manner enhancing its binding to ULK1. In turn, promotes starvation-induced autophagy activation. Also interacts with p62/SQSTM1 protein and thereby induces the formation and the autophagy clearance of aggresome-associated polyubiquitinated proteins through HDAC6 interaction. Also promotes NLRP3 inflammasome activation by directly inducing NLRP3 oligomerization independent of its E3 ligase function. This chain is E3 ubiquitin-protein ligase TRIM50 (Trim50), found in Mus musculus (Mouse).